Here is a 138-residue protein sequence, read N- to C-terminus: Transcription antitermination protein NusB (138 aa).

The protein belongs to the NusB family.

Functionally, involved in transcription antitermination. Required for transcription of ribosomal RNA (rRNA) genes. Binds specifically to the boxA antiterminator sequence of the ribosomal RNA (rrn) operons. This is Transcription antitermination protein NusB from Leptospira borgpetersenii serovar Hardjo-bovis (strain JB197).